The following is a 407-amino-acid chain: tRNA (uracil(54)-C(5))-methyltransferase (407 aa).

[4Fe-4S] cluster is bound by residues Cys61, Cys67, Cys70, and Cys137. Residues Gln253, Tyr279, Thr284, 300–301 (DS), Asp327, and Asp341 contribute to the S-adenosyl-L-methionine site. Catalysis depends on Cys368, which acts as the Nucleophile. Catalysis depends on Glu400, which acts as the Proton acceptor.

It belongs to the class I-like SAM-binding methyltransferase superfamily. RNA M5U methyltransferase family.

The catalysed reaction is uridine(54) in tRNA + S-adenosyl-L-methionine = 5-methyluridine(54) in tRNA + S-adenosyl-L-homocysteine + H(+). In terms of biological role, catalyzes the formation of 5-methyl-uridine at position 54 (m5U54) in tRNA. The polypeptide is tRNA (uracil(54)-C(5))-methyltransferase (Pyrococcus horikoshii (strain ATCC 700860 / DSM 12428 / JCM 9974 / NBRC 100139 / OT-3)).